The primary structure comprises 56 residues: Large ribosomal subunit protein bL32 (56 aa).

A compositionally biased stretch (basic residues) spans 1–16 (MAVQKSKKSRAARGMR). The disordered stretch occupies residues 1 to 22 (MAVQKSKKSRAARGMRRSHDAL).

Belongs to the bacterial ribosomal protein bL32 family.

In Photobacterium profundum (strain SS9), this protein is Large ribosomal subunit protein bL32.